Reading from the N-terminus, the 428-residue chain is GTPase Obg (428 aa).

One can recognise an Obg domain in the interval Met-1 to Leu-158. Residues Ala-159–Glu-329 enclose the OBG-type G domain. Residues Gly-165–Ser-172, Phe-190–Val-194, Asp-212–Gly-215, Asn-282–Asp-285, and Ser-310–Val-312 each bind GTP. 2 residues coordinate Mg(2+): Ser-172 and Thr-192. An OCT domain is found at Lys-350 to Asp-428.

The protein belongs to the TRAFAC class OBG-HflX-like GTPase superfamily. OBG GTPase family. As to quaternary structure, monomer. Requires Mg(2+) as cofactor.

It is found in the cytoplasm. In terms of biological role, an essential GTPase which binds GTP, GDP and possibly (p)ppGpp with moderate affinity, with high nucleotide exchange rates and a fairly low GTP hydrolysis rate. Plays a role in control of the cell cycle, stress response, ribosome biogenesis and in those bacteria that undergo differentiation, in morphogenesis control. In Anoxybacillus flavithermus (strain DSM 21510 / WK1), this protein is GTPase Obg.